Consider the following 215-residue polypeptide: NADH-quinone oxidoreductase subunit C (215 aa).

Belongs to the complex I 30 kDa subunit family. As to quaternary structure, NDH-1 is composed of 14 different subunits. Subunits NuoB, C, D, E, F, and G constitute the peripheral sector of the complex.

It is found in the cell inner membrane. It catalyses the reaction a quinone + NADH + 5 H(+)(in) = a quinol + NAD(+) + 4 H(+)(out). Functionally, NDH-1 shuttles electrons from NADH, via FMN and iron-sulfur (Fe-S) centers, to quinones in the respiratory chain. The immediate electron acceptor for the enzyme in this species is believed to be ubiquinone. Couples the redox reaction to proton translocation (for every two electrons transferred, four hydrogen ions are translocated across the cytoplasmic membrane), and thus conserves the redox energy in a proton gradient. The polypeptide is NADH-quinone oxidoreductase subunit C (Bordetella parapertussis (strain 12822 / ATCC BAA-587 / NCTC 13253)).